Here is a 58-residue protein sequence, read N- to C-terminus: MPDPCCIDKCECKEGGCKAGCKCTSCRCTPCEKCSSGCKCTTKEDCCKTCTKPCSCCP.

The interval 1–29 (MPDPCCIDKCECKEGGCKAGCKCTSCRCT) is beta. The a divalent metal cation site is built by Cys5, Cys6, Cys10, Cys12, Cys17, Cys21, Cys23, Cys26, Cys28, Cys31, Cys34, Cys38, Cys40, Cys46, Cys50, Cys54, Cys56, and Cys57. Positions 30-58 (PCEKCSSGCKCTTKEDCCKTCTKPCSCCP) are alpha.

Belongs to the metallothionein superfamily. Type 3 family.

Metallothioneins have a high content of cysteine residues that bind various heavy metals. Class I MTS in marine crustacea are involved in the sequestration of elevated levels of heavy-metal ions. The chain is Metallothionein from Carcinus maenas (Common shore crab).